The primary structure comprises 223 residues: Cytochrome c biogenesis ATP-binding export protein CcmA (223 aa).

An ABC transporter domain is found at 20-222 (LAAHALTYSR…PTRLLHLKKA (203 aa)). 52 to 59 (GPNGIGKT) is an ATP binding site.

Belongs to the ABC transporter superfamily. CcmA exporter (TC 3.A.1.107) family. In terms of assembly, the complex is composed of two ATP-binding proteins (CcmA) and two transmembrane proteins (CcmB).

Its subcellular location is the cell inner membrane. The enzyme catalyses heme b(in) + ATP + H2O = heme b(out) + ADP + phosphate + H(+). Its function is as follows. Part of the ABC transporter complex CcmAB involved in the biogenesis of c-type cytochromes; once thought to export heme, this seems not to be the case, but its exact role is uncertain. Responsible for energy coupling to the transport system. The sequence is that of Cytochrome c biogenesis ATP-binding export protein CcmA from Xylella fastidiosa (strain 9a5c).